The primary structure comprises 405 residues: Prenyltransferase phqA (405 aa).

Tyr-195, Lys-262, and Gln-332 together coordinate dimethylallyl diphosphate.

Belongs to the tryptophan dimethylallyltransferase family.

It participates in alkaloid biosynthesis. In terms of biological role, prenyltransferase; part of the gene cluster that mediates the biosynthesis of paraherquamide, a fungal indole alkaloid that belongs to a family of natural products containing a characteristic bicyclo[2.2.2]diazaoctane core. The first steps in the biosynthesis of paraherquamide is the production of the beta-methyl-proline precursor from L-isoleucine. They require oxidation of a terminally hydroxylated L-isoleucine to the corresponding aldehyde by enzymes which have still to be identified. Spontaneous cyclization and dehydration would yield the 4-methyl pyrolline-5-carboxylic acid, which is then reduced by the pyrroline-5-carboxylate reductase phqD leading to the beta-methyl-proline precursor. The next step of paraherquamide biosynthesis involves coupling of beta-methyl-proline and L-tryptophan by the bimodular NRPS phqB, to produce a monooxopiperazine intermediate. The reductase (R) domain of phqB utilizes NADPH for hydride transfer to reduce the thioester bond of the T domain-tethered linear dipeptide to a hemithioaminal intermediate, which spontaneously cleaves the C-S bond to release the aldehyde product. This compound undergoes spontaneous cyclization and dehydration to give a dienamine which is reverse prenylated at C-2 by the reverse prenyltransferase phqJ. The other prenyltransferase present in the cluster, phqI may be a redundant gene in the pathway. During biosynthetic assembly, the key step to produce the polycyclic core is catalyzed by the bifunctional reductase and intramolecular [4+2] Diels-Alderase, phqE, resulting in formation of the [2.2.2] diazaoctane intermediate preparaherquamide. Following formation of preparaherquamide, an indole 2,3-epoxidation-initiated pinacol-like rearrangement is catalyzed by the phqK FAD-dependent monooxygenase. The prenyltransferase phqA, the cytochrome P450 monooxygenase phqL, and the FAD-linked oxidoreductase phqH (or the cytochrome P450 monooxygenase phqM), are proposed to be involved in the formation of the pyran ring. The FAD-dependent monooxygenase phqK is likely responsible for generation of the spiro-oxindole, and the N-methylation is likely mediated by the phqN methyltransferase leading to the isolable natural product paraherquamide F. However, the order of these biosynthetic steps has still to be determined. In late-stage paraherquamide biosynthesis, the third P450 monooxygenase, phqO, is probably responsible for the C-14 hydroxylation, transforming paraherquamide F to paraherquamide G, and paraherquamide E to the final product paraherquamide A. The expansion from the 6-membered ring pyran (in paraherquamides F and G) to the 7-membered dioxepin ring (in paraherquamides A and E) represents a poorly understood but intriguing process that probably involves the 2-oxoglutarate-dependent dioxygenase phqC. Finally, the remaining members of the paraherquamide cluster, including phqI as well as phqM (or phqH), do not have a clearly prescribed role and appear to be redundant. This Penicillium fellutanum protein is Prenyltransferase phqA.